A 138-amino-acid chain; its full sequence is Large ribosomal subunit protein uL16 (138 aa).

Over residues 1 to 17 (MLIPRKVKHRKQHHPRQ) the composition is skewed to basic residues. Positions 1 to 24 (MLIPRKVKHRKQHHPRQRGIASGG) are disordered.

It belongs to the universal ribosomal protein uL16 family. In terms of assembly, part of the 50S ribosomal subunit.

Its function is as follows. Binds 23S rRNA and is also seen to make contacts with the A and possibly P site tRNAs. The sequence is that of Large ribosomal subunit protein uL16 from Mycolicibacterium gilvum (strain PYR-GCK) (Mycobacterium gilvum (strain PYR-GCK)).